The following is a 196-amino-acid chain: Homeobox protein XENK-2 (196 aa).

The disordered stretch occupies residues 48–72 (PSADESPDNDKELSSNPDSGKKRKR). Residues 69–128 (KRKRRVLFSKAQTYELERRFRQQRYLSAPEREHLASLIRLTPTQVKIWFQNHRYKMKRAR) constitute a DNA-binding region (homeobox).

Belongs to the NK-2 homeobox family. Forebrain and midbrain.

The protein resides in the nucleus. In terms of biological role, defines dorsal-ventral domains in developing brain. May play a role in defining positional information along the anterior-posterior (a/p) axis and the dorsal-ventral (d/v) axis of the developing nervous system. May be involved in determining positional or boundary information rather than determining a given cell type. In Xenopus laevis (African clawed frog), this protein is Homeobox protein XENK-2.